Reading from the N-terminus, the 1079-residue chain is MEQQQQKSAAHVSKLFVCTAVDCKDEIEEKFERSYVSLQQQIAGLSDKEMHDMLTQIVCKEKQHEEISIGFLYIILTDPAMAPKTYRDITLVSRDGMNVIVANLTLLVAEKYAKLTETARRQLIWVLREFVKHQVLSVENVIWNCLRQAGGGDVSHKNLFLVESLLDIFIEYRAWLEAIPFLVQSSVYSFVRLIEDHANPALMPLRQKEVKFTISLIRDRFQDIIPLGRDFVRLLQNVARIPEFELLWRDILCNPKSLHPTFNGIWHLLQIRTSRRFLQCRLLPEMERKLHFLASSVKFGNQKRYQDWFQDKYFATPESHSLRSDLIRFIINVIHPTNDMLCSDIIPRWAIIGWLISSCTNPIASANAKLSLFYDWLFFDPAKDNIMNIEPGILVMYHSIRNHPFVSSTLLDFLCRITKNFYIKNEDKIRLGVYNSLKLILDKQVIPNLHPLFESPKLDRELRNLIRENFREFVSPVANMPQSIYPATHSIQAPIFKKEADQRMLQSENIDVGSGAFAANSGTISLVDDDNKIAITPVESSERETEAVFSDDDGENIARCNKNDENTDDDDDLPLSKVRLKEKPVPEKVELPDAIAESFEIFVTKRNSFTWEAFLKDFRTLPASTLDETQLNYVISNTVLILRETLPQQNVFSESKTEEKYLAKSISYPLYGLFRFLYENEDKSKKPFQTLLSEICERLSETGYLLLYFMKIHCKLQTRKNAQQSYQFKTTVYRQICEATDEKIGICLVRDLDLLEKENTTIYLWLLPDIYREFKTIAINNTDLLRITLRCVDAKNVRDIMYSIAQGKLTIFKQDGLIDCIRESLEYETYEQFCLWQLIQAHDVPLKCIQDILPELEAANHPEALSHLLLLLKNEEPTSEIIRLLLSREAKTRGDPFVTSALRFWCQRCEEKLSEIIASLLTSKYPSSSPNKRKRPSKGSSAASSTPSADHVLNHLEHYRRSCRHGTGTGLYVHDMMQRALQSAYSHSNESTKKQFSDLFALAAEDETTAVGRRGGSGRGRKQPVGKKDSNNHNAGSKKNSDVVKTIYSSDENSSEEDWSKHKITQAAKKRKKAINDSD.

Disordered stretches follow at residues 539–574 (ESSE…DDLP), 925–949 (YPSS…TPSA), and 1010–1079 (AVGR…NDSD). Low complexity predominate over residues 938–949 (KGSSAASSTPSA). S1049, S1050, S1054, and S1055 each carry phosphoserine. Basic residues predominate over residues 1062–1073 (HKITQAAKKRKK).

It belongs to the Integrator subunit 3 family. In terms of assembly, belongs to the multiprotein complex Integrator, at least composed of IntS1, IntS2, IntS3, IntS4, omd/IntS5, IntS6, defl/IntS7, IntS8, IntS9, IntS10, IntS11, IntS12, asun/IntS13, IntS14 and IntS15. The core complex associates with protein phosphatase 2A subunits mts/PP2A and Pp2A-29B, to form the Integrator-PP2A (INTAC) complex.

It is found in the nucleus. Its subcellular location is the cytoplasm. In terms of biological role, component of the integrator complex, a multiprotein complex that terminates RNA polymerase II (Pol II) transcription in the promoter-proximal region of genes. The integrator complex provides a quality checkpoint during transcription elongation by driving premature transcription termination of transcripts that are unfavorably configured for transcriptional elongation: the complex terminates transcription by (1) catalyzing dephosphorylation of the C-terminal domain (CTD) of Pol II subunit Polr2A/Rbp1 and Spt5, and (2) degrading the exiting nascent RNA transcript via endonuclease activity. The integrator complex is also involved in the 3'-end processing of the U7 snRNA, and also the spliceosomal snRNAs U1, U2, U4 and U5. This is Integrator complex subunit 3 homolog (IntS3) from Drosophila virilis (Fruit fly).